A 505-amino-acid polypeptide reads, in one-letter code: MAQIDFRKKINWHRRYRSPQGVKTEHEILRIFESDRGRIINSPAIRRLQQKTQVFPLERNAAVRTRLTHSMEVQQVGRYIAKEILSRLKELKLLEAYGLDELTGPFESIVEMSCLMHDIGNPPFGHFGEAAINDWFRQRLHPEDAESQPLTDDRCSVAALRLRDGEEPLNELRRKIRQDLCHFEGNAQGIRLVHTLMRMNLTWAQVGGILKYTRPAWWRGETPETHHYLMKKPGYYLSEEAYIARLRKELNLALYSRFPLTWIMEAADDISYCVADLEDAVEKRIFTVEQLYHHLHEAWGQHEKGSLFSLVVENAWEKSRSNSLSRSTEDQFFMYLRVNTLNKLVPYAAQRFIDNLPAIFAGTFNHALLEDASECSDLLKLYKNVAVKHVFSHPDVEQLELQGYRVISGLLEIYRPLLSLSLSDFTELVEKERVKRFPIESRLFHKLSTRHRLAYVEAGSKLPSDSPEFPLWEYYYRCRLLQDYISGMTDLYAWDEYRRLMAVEQ.

The region spanning 66–273 is the HD domain; sequence RLTHSMEVQQ…MEAADDISYC (208 aa).

The protein belongs to the dGTPase family. Type 1 subfamily. In terms of assembly, homotetramer. It depends on Mg(2+) as a cofactor.

It catalyses the reaction dGTP + H2O = 2'-deoxyguanosine + triphosphate + H(+). In terms of biological role, dGTPase preferentially hydrolyzes dGTP over the other canonical NTPs. The polypeptide is Deoxyguanosinetriphosphate triphosphohydrolase (Shigella flexneri).